The following is a 503-amino-acid chain: Glutamate--tRNA ligase (503 aa).

The 'HIGH' region motif lies at 12–22 (PSPTGYLHVGG). Positions 259-263 (KLSKR) match the 'KMSKS' region motif. Lys262 contributes to the ATP binding site.

This sequence belongs to the class-I aminoacyl-tRNA synthetase family. Glutamate--tRNA ligase type 1 subfamily. As to quaternary structure, monomer.

It localises to the cytoplasm. The catalysed reaction is tRNA(Glu) + L-glutamate + ATP = L-glutamyl-tRNA(Glu) + AMP + diphosphate. Its function is as follows. Catalyzes the attachment of glutamate to tRNA(Glu) in a two-step reaction: glutamate is first activated by ATP to form Glu-AMP and then transferred to the acceptor end of tRNA(Glu). In Chloroherpeton thalassium (strain ATCC 35110 / GB-78), this protein is Glutamate--tRNA ligase.